The chain runs to 79 residues: CDC42 small effector protein 1 (79 aa).

Residues Cys10 and Cys11 are each lipidated (S-palmitoyl cysteine). In terms of domain architecture, CRIB spans 30 to 43 (IGEPMNFVHLTHIG). The tract at residues 48–79 (GAGDGLAMTGAVQEQMRSKGNRDRPWSNSRGL) is disordered. Over residues 63–72 (MRSKGNRDRP) the composition is skewed to basic and acidic residues.

This sequence belongs to the CDC42SE/SPEC family. Interacts with CDC42 (in GTP-bound form). Interacts weakly with RAC1 and not at all with RHOA.

It is found in the cytoplasm. It localises to the cytoskeleton. The protein localises to the cell membrane. In terms of biological role, probably involved in the organization of the actin cytoskeleton by acting downstream of CDC42, inducing actin filament assembly. Alters CDC42-induced cell shape changes. In activated T-cells, may play a role in CDC42-mediated F-actin accumulation at the immunological synapse. May play a role in early contractile events in phagocytosis in macrophages. The sequence is that of CDC42 small effector protein 1 (CDC42SE1) from Pongo abelii (Sumatran orangutan).